We begin with the raw amino-acid sequence, 65 residues long: Putative antitoxin MJECL31 (65 aa).

This sequence belongs to the UPF0165 family.

Its function is as follows. Possibly the antitoxin component of a type II toxin-antitoxin (TA) system. The protein is Putative antitoxin MJECL31 of Methanocaldococcus jannaschii (strain ATCC 43067 / DSM 2661 / JAL-1 / JCM 10045 / NBRC 100440) (Methanococcus jannaschii).